A 770-amino-acid polypeptide reads, in one-letter code: Probable methyltransferase PMT24 (770 aa).

Over 1–17 (MAMGKYSRVDGKKSSGY) the chain is Cytoplasmic. A helical; Signal-anchor for type II membrane protein transmembrane segment spans residues 18–38 (GLTITIVLIVSLCLVGAWMFM). The Lumenal portion of the chain corresponds to 39–770 (SSWSAPTESI…EAETIQSAIA (732 aa)). Basic and acidic residues-rich tracts occupy residues 54–81 (ERTK…FPDE) and 93–164 (NEEK…KSED). The disordered stretch occupies residues 54–223 (ERTKDVDTTK…STGSGAWSTQ (170 aa)). N-linked (GlcNAc...) asparagine glycans are attached at residues Asn-160 and Asn-166. The span at 212–223 (ESSTGSGAWSTQ) shows a compositional bias: polar residues. 2 N-linked (GlcNAc...) asparagine glycosylation sites follow: Asn-244 and Asn-363.

The protein belongs to the methyltransferase superfamily.

The protein localises to the golgi apparatus membrane. This Arabidopsis thaliana (Mouse-ear cress) protein is Probable methyltransferase PMT24.